Reading from the N-terminus, the 494-residue chain is Glutamyl-tRNA(Gln) amidotransferase subunit A (494 aa).

Residues Lys-79 and Ser-159 each act as charge relay system in the active site. The active-site Acyl-ester intermediate is the Ser-183.

The protein belongs to the amidase family. GatA subfamily. In terms of assembly, heterotrimer of A, B and C subunits.

The enzyme catalyses L-glutamyl-tRNA(Gln) + L-glutamine + ATP + H2O = L-glutaminyl-tRNA(Gln) + L-glutamate + ADP + phosphate + H(+). Allows the formation of correctly charged Gln-tRNA(Gln) through the transamidation of misacylated Glu-tRNA(Gln) in organisms which lack glutaminyl-tRNA synthetase. The reaction takes place in the presence of glutamine and ATP through an activated gamma-phospho-Glu-tRNA(Gln). The protein is Glutamyl-tRNA(Gln) amidotransferase subunit A of Bartonella henselae (strain ATCC 49882 / DSM 28221 / CCUG 30454 / Houston 1) (Rochalimaea henselae).